A 294-amino-acid chain; its full sequence is Acetylglutamate kinase (294 aa).

Substrate contacts are provided by residues 63 to 64 (GG), Arg85, and Asn188.

Belongs to the acetylglutamate kinase family. ArgB subfamily.

The protein resides in the cytoplasm. It catalyses the reaction N-acetyl-L-glutamate + ATP = N-acetyl-L-glutamyl 5-phosphate + ADP. It participates in amino-acid biosynthesis; L-arginine biosynthesis; N(2)-acetyl-L-ornithine from L-glutamate: step 2/4. Its function is as follows. Catalyzes the ATP-dependent phosphorylation of N-acetyl-L-glutamate. The polypeptide is Acetylglutamate kinase (Methanococcus maripaludis (strain C7 / ATCC BAA-1331)).